A 129-amino-acid polypeptide reads, in one-letter code: Small ribosomal subunit protein uS9 (129 aa).

It belongs to the universal ribosomal protein uS9 family.

This chain is Small ribosomal subunit protein uS9 (rps9), found in Thermoplasma acidophilum (strain ATCC 25905 / DSM 1728 / JCM 9062 / NBRC 15155 / AMRC-C165).